The following is a 293-amino-acid chain: DNA repair protein RecO (293 aa).

This sequence belongs to the RecO family.

Its function is as follows. Involved in DNA repair and RecF pathway recombination. This is DNA repair protein RecO from Cyanothece sp. (strain PCC 7425 / ATCC 29141).